The chain runs to 624 residues: Probable potassium transport system protein Kup 2 (624 aa).

12 helical membrane passes run leucine 14–phenylalanine 34, isoleucine 51–valine 71, glycine 97–leucine 117, leucine 133–phenylalanine 153, isoleucine 163–phenylalanine 183, serine 211–alanine 231, tryptophan 245–leucine 265, phenylalanine 283–isoleucine 303, valine 335–phenylalanine 355, alanine 364–alanine 384, phenylalanine 393–isoleucine 413, and leucine 416–threonine 436.

The protein belongs to the HAK/KUP transporter (TC 2.A.72) family.

It localises to the cell inner membrane. It catalyses the reaction K(+)(in) + H(+)(in) = K(+)(out) + H(+)(out). Its function is as follows. Transport of potassium into the cell. Likely operates as a K(+):H(+) symporter. The chain is Probable potassium transport system protein Kup 2 from Legionella pneumophila (strain Lens).